The chain runs to 63 residues: Megourin-3 (63 aa).

As to quaternary structure, monomer. Contains four disulfide bonds.

The protein localises to the secreted. Has antimicrobial activity against Gram-positive bacteria and fungi. This chain is Megourin-3, found in Megoura viciae (Vetch aphid).